We begin with the raw amino-acid sequence, 284 residues long: tRNA dimethylallyltransferase (284 aa).

6–13 (GPTASGKS) provides a ligand contact to ATP. 8–13 (TASGKS) provides a ligand contact to substrate. Residues 31 to 34 (DSLS) are interaction with substrate tRNA.

The protein belongs to the IPP transferase family. Monomer. Requires Mg(2+) as cofactor.

It carries out the reaction adenosine(37) in tRNA + dimethylallyl diphosphate = N(6)-dimethylallyladenosine(37) in tRNA + diphosphate. In terms of biological role, catalyzes the transfer of a dimethylallyl group onto the adenine at position 37 in tRNAs that read codons beginning with uridine, leading to the formation of N6-(dimethylallyl)adenosine (i(6)A). The polypeptide is tRNA dimethylallyltransferase (Nautilia profundicola (strain ATCC BAA-1463 / DSM 18972 / AmH)).